The sequence spans 210 residues: Ribosomal RNA large subunit methyltransferase E (210 aa).

S-adenosyl-L-methionine-binding residues include Gly-60, Trp-62, Asp-80, Asp-96, and Asp-121. Lys-161 (proton acceptor) is an active-site residue.

The protein belongs to the class I-like SAM-binding methyltransferase superfamily. RNA methyltransferase RlmE family.

The protein localises to the cytoplasm. The enzyme catalyses uridine(2552) in 23S rRNA + S-adenosyl-L-methionine = 2'-O-methyluridine(2552) in 23S rRNA + S-adenosyl-L-homocysteine + H(+). Functionally, specifically methylates the uridine in position 2552 of 23S rRNA at the 2'-O position of the ribose in the fully assembled 50S ribosomal subunit. This is Ribosomal RNA large subunit methyltransferase E from Vesicomyosocius okutanii subsp. Calyptogena okutanii (strain HA).